A 1144-amino-acid chain; its full sequence is Ribonucleoside-diphosphate reductase large subunit (1144 aa).

Residues 1 to 33 (MANRPAASALAGARSPSERQEPREPEVAPPGGD) form a disordered region. A compositionally biased stretch (basic and acidic residues) spans 16–26 (PSERQEPREPE). Positions 55 to 75 (AYRISDSSFVQCGSNCSMIID) match the RIP homotypic interaction motif (RHIM) motif. A disordered region spans residues 118-324 (SGPSATTSVG…TDPGYPVPLE (207 aa)). A compositionally biased stretch (polar residues) spans 119-132 (GPSATTSVGTQTSG). A compositionally biased stretch (pro residues) spans 141-159 (TPEPQGPQAVPPPPPPPFP). Residues 164-179 (CCARRDARGGAEKDVG) show a composition bias toward basic and acidic residues. The segment covering 192 to 204 (SETEDSDSSDEDT) has biased composition (acidic residues). Low complexity-rich tracts occupy residues 205-216 (GSGSETLSRSSS) and 279-305 (GSATDPRASADSDSAAHAAAPQADVAP). Substrate is bound by residues Thr-573, 588 to 589 (SC), Gly-619, 798 to 802 (NLCTE), and 975 to 979 (PTAAS). Residues Cys-589 and Cys-815 are joined by a disulfide bond. Asn-798 (proton acceptor) is an active-site residue. Cys-800 (cysteine radical intermediate) is an active-site residue. Residue Glu-802 is the Proton acceptor of the active site.

The protein belongs to the ribonucleoside diphosphate reductase large chain family. As to quaternary structure, heterotetramer composed of a homodimer of the large subunit (R1) and a homodimer of the small subunit (R2). Larger multisubunit protein complex are also active, composed of (R1)n(R2)n. May self-assemble (via RIP homotypic interaction motif/RHIM) into homomeric fibrillar amyloid structures. Interacts (via RHIM) with human RIPK1 (via RHIM). Interacts (via RHIM) with human RIPK3 (via RHIM). May interact (via RHIM) with human ZBP1 (via RHIM). Interacts (via C-terminus) with host CASP8.

The catalysed reaction is a 2'-deoxyribonucleoside 5'-diphosphate + [thioredoxin]-disulfide + H2O = a ribonucleoside 5'-diphosphate + [thioredoxin]-dithiol. In terms of biological role, ribonucleoside-diphosphate reductase holoenzyme that provides the precursors necessary for viral DNA synthesis. Allows virus growth in non-dividing cells, as well as reactivation from latency in infected hosts. Catalyzes the biosynthesis of deoxyribonucleotides from the corresponding ribonucleotides. The N-terminal region confers antiapoptotic activity in differentiated cells such as neurons and is important for viral reactivation to increase neural survivability. Prevents host necroptosis by targeting host RIPK1 and RIPK3, thereby hampering the formation of necroptotic RIPK1-RIPK3 complexes. May form hetero-amyloid structures with host proteins RIPK3 or ZBP1, thereby preventing RIPK3- and ZBP1-mediated necroptosis. In addition, inhibits extrinsic apoptosis by targeting host CASP8. The chain is Ribonucleoside-diphosphate reductase large subunit from Homo sapiens (Human).